A 204-amino-acid polypeptide reads, in one-letter code: Putative 3-methyladenine DNA glycosylase (204 aa).

This sequence belongs to the DNA glycosylase MPG family.

The polypeptide is Putative 3-methyladenine DNA glycosylase (Bacillus mycoides (strain KBAB4) (Bacillus weihenstephanensis)).